The sequence spans 276 residues: Energy-coupling factor transporter ATP-binding protein EcfA2 (276 aa).

The region spanning M1 to D233 is the ABC transporter domain. G27–S34 lines the ATP pocket. E158 functions as the Proton acceptor in the catalytic mechanism.

It belongs to the ABC transporter superfamily. Energy-coupling factor EcfA family. As to quaternary structure, forms a stable energy-coupling factor (ECF) transporter complex composed of 2 membrane-embedded substrate-binding proteins (S component), 2 ATP-binding proteins (A component) and 2 transmembrane proteins (T component).

Its subcellular location is the cell membrane. Functionally, ATP-binding (A) component of a common energy-coupling factor (ECF) ABC-transporter complex. Unlike classic ABC transporters this ECF transporter provides the energy necessary to transport a number of different substrates. The protein is Energy-coupling factor transporter ATP-binding protein EcfA2 of Bacillus subtilis (strain 168).